The primary structure comprises 215 residues: Dual specificity phosphatase 29 (215 aa).

The region spanning 53–201 (HVNEVWPRLH…LRELDKQLVK (149 aa)) is the Tyrosine-protein phosphatase domain. Residue 145-152 (HCAMGRSR) coordinates substrate. The active-site Phosphocysteine intermediate is Cys146.

The protein belongs to the protein-tyrosine phosphatase family. Non-receptor class dual specificity subfamily. As to quaternary structure, homodimer. Interacts with PRKAA2. Skeletal muscle, liver and adipose tissue.

Its subcellular location is the cytoplasm. The protein resides in the nucleus. It carries out the reaction O-phospho-L-tyrosyl-[protein] + H2O = L-tyrosyl-[protein] + phosphate. It catalyses the reaction O-phospho-L-seryl-[protein] + H2O = L-seryl-[protein] + phosphate. The catalysed reaction is O-phospho-L-threonyl-[protein] + H2O = L-threonyl-[protein] + phosphate. Dual specificity phosphatase able to dephosphorylate phosphotyrosine, phosphoserine and phosphothreonine residues within the same substrate, with a preference for phosphotyrosine as a substrate. Involved in the modulation of intracellular signaling cascades. In skeletal muscle regulates systemic glucose homeostasis by activating, AMPK, an energy sensor protein kinase. Affects MAP kinase signaling though modulation of the MAPK1/2 cascade in skeletal muscle promoting muscle cell differentiation, development and atrophy. This chain is Dual specificity phosphatase 29, found in Mus musculus (Mouse).